A 410-amino-acid polypeptide reads, in one-letter code: Protein LTV1 homolog (410 aa).

2 disordered regions span residues 142–165 and 325–378; these read VYRS…DEMY and EMDI…ARKL. Acidic residues-rich tracts occupy residues 151–165 and 325–345; these read DSEE…DEMY and EMDI…DDDK. The segment covering 357-366 has biased composition (basic and acidic residues); sequence PKNETPEQRS. A coiled-coil region spans residues 363 to 389; that stretch reads EQRSLRKKAVKEARKLRRVEKKANKTM. Positions 367–378 are enriched in basic residues; it reads LRKKAVKEARKL.

Belongs to the LTV1 family.

The sequence is that of Protein LTV1 homolog from Caenorhabditis elegans.